The sequence spans 132 residues: Large ribosomal subunit protein uL22 (132 aa).

Belongs to the universal ribosomal protein uL22 family. Part of the 50S ribosomal subunit.

Functionally, this protein binds specifically to 23S rRNA; its binding is stimulated by other ribosomal proteins, e.g. L4, L17, and L20. It is important during the early stages of 50S assembly. It makes multiple contacts with different domains of the 23S rRNA in the assembled 50S subunit and ribosome. The globular domain of the protein is located near the polypeptide exit tunnel on the outside of the subunit, while an extended beta-hairpin is found that lines the wall of the exit tunnel in the center of the 70S ribosome. In Pelagibacter ubique (strain HTCC1062), this protein is Large ribosomal subunit protein uL22.